Consider the following 465-residue polypeptide: uncharacterized protein (465 aa).

Basic and acidic residues predominate over residues 1 to 15 (MEKNYIFENSIYKDE). 2 disordered regions span residues 1 to 31 (MEKNYIFENSIYKDENENDNEDDQYYNNNSS) and 288 to 320 (QLEKQLINEQQQHQQQQELNNSSQPQQEQEQLP).

This is an uncharacterized protein from Dictyostelium discoideum (Social amoeba).